A 221-amino-acid chain; its full sequence is Cytidylate kinase 1 (221 aa).

7–15 (GPSASGKSS) lines the ATP pocket.

Belongs to the cytidylate kinase family. Type 1 subfamily.

It is found in the cytoplasm. It carries out the reaction CMP + ATP = CDP + ADP. The catalysed reaction is dCMP + ATP = dCDP + ADP. The protein is Cytidylate kinase 1 of Borreliella afzelii (strain PKo) (Borrelia afzelii).